A 713-amino-acid chain; its full sequence is Phosphoribosylformylglycinamidine synthase subunit PurL (713 aa).

The active site involves His-32. Tyr-35 is an ATP binding site. Glu-76 contributes to the Mg(2+) binding site. Substrate contacts are provided by residues 77–80 (SHNH) and Arg-99. Residue His-78 is the Proton acceptor of the active site. Position 100 (Asp-100) interacts with Mg(2+). Substrate is bound at residue Gln-224. Asp-252 is a binding site for Mg(2+). 296 to 298 (ESQ) is a substrate binding site. ATP contacts are provided by Asp-471 and Gly-508. Asn-509 serves as a coordination point for Mg(2+). Ser-511 lines the substrate pocket.

The protein belongs to the FGAMS family. Monomer. Part of the FGAM synthase complex composed of 1 PurL, 1 PurQ and 2 PurS subunits.

The protein localises to the cytoplasm. It carries out the reaction N(2)-formyl-N(1)-(5-phospho-beta-D-ribosyl)glycinamide + L-glutamine + ATP + H2O = 2-formamido-N(1)-(5-O-phospho-beta-D-ribosyl)acetamidine + L-glutamate + ADP + phosphate + H(+). The protein operates within purine metabolism; IMP biosynthesis via de novo pathway; 5-amino-1-(5-phospho-D-ribosyl)imidazole from N(2)-formyl-N(1)-(5-phospho-D-ribosyl)glycinamide: step 1/2. Its function is as follows. Part of the phosphoribosylformylglycinamidine synthase complex involved in the purines biosynthetic pathway. Catalyzes the ATP-dependent conversion of formylglycinamide ribonucleotide (FGAR) and glutamine to yield formylglycinamidine ribonucleotide (FGAM) and glutamate. The FGAM synthase complex is composed of three subunits. PurQ produces an ammonia molecule by converting glutamine to glutamate. PurL transfers the ammonia molecule to FGAR to form FGAM in an ATP-dependent manner. PurS interacts with PurQ and PurL and is thought to assist in the transfer of the ammonia molecule from PurQ to PurL. This Thermococcus kodakarensis (strain ATCC BAA-918 / JCM 12380 / KOD1) (Pyrococcus kodakaraensis (strain KOD1)) protein is Phosphoribosylformylglycinamidine synthase subunit PurL.